We begin with the raw amino-acid sequence, 386 residues long: Probable dual-specificity RNA methyltransferase RlmN (386 aa).

E123 serves as the catalytic Proton acceptor. The region spanning 129-372 is the Radical SAM core domain; sequence YPTRTTLCIS…ATLRDTRGQD (244 aa). Cysteines 136 and 377 form a disulfide. Residues C143, C147, and C150 each contribute to the [4Fe-4S] cluster site. S-adenosyl-L-methionine-binding positions include 198-199, S232, 255-257, and N334; these read GE and SLH. The active-site S-methylcysteine intermediate is the C377.

The protein belongs to the radical SAM superfamily. RlmN family. It depends on [4Fe-4S] cluster as a cofactor.

The protein localises to the cytoplasm. It carries out the reaction adenosine(2503) in 23S rRNA + 2 reduced [2Fe-2S]-[ferredoxin] + 2 S-adenosyl-L-methionine = 2-methyladenosine(2503) in 23S rRNA + 5'-deoxyadenosine + L-methionine + 2 oxidized [2Fe-2S]-[ferredoxin] + S-adenosyl-L-homocysteine. The enzyme catalyses adenosine(37) in tRNA + 2 reduced [2Fe-2S]-[ferredoxin] + 2 S-adenosyl-L-methionine = 2-methyladenosine(37) in tRNA + 5'-deoxyadenosine + L-methionine + 2 oxidized [2Fe-2S]-[ferredoxin] + S-adenosyl-L-homocysteine. In terms of biological role, specifically methylates position 2 of adenine 2503 in 23S rRNA and position 2 of adenine 37 in tRNAs. In Bifidobacterium adolescentis (strain ATCC 15703 / DSM 20083 / NCTC 11814 / E194a), this protein is Probable dual-specificity RNA methyltransferase RlmN.